Consider the following 214-residue polypeptide: MHVTRPKSSKGRSRPMITNSSMIYTPSQPSALSPQPPAAAKTKDKSNQSLRSRAILRRSSQPTTDILTEAYDRPPEEPVSLNRYRVLPSIEKKTSTDNQKCSQCVSRHRKCQHTNARLDVVSDSTPPEESDLLLAIRTPCGQRFKRSFRPSDQLKGVLSAAEAEFGDRFDNCIIETMDVPRRTFSNLTMTLAQCGVLNKSVLCISHDDSEMDLT.

Over residues 1–13 the composition is skewed to basic residues; that stretch reads MHVTRPKSSKGRS. Positions 1-79 are disordered; the sequence is MHVTRPKSSK…AYDRPPEEPV (79 aa). The segment covering 16–25 has biased composition (polar residues); the sequence is MITNSSMIYT. Residues 49–60 show a composition bias toward low complexity; the sequence is SLRSRAILRRSS. One can recognise a UBX domain in the interval 127-204; sequence PEESDLLLAI…GVLNKSVLCI (78 aa).

The protein belongs to the UBXN10 family.

The protein resides in the cell projection. Its subcellular location is the cilium. Its function is as follows. Required for ciliogenesis. Acts as a tethering factor that facilitates recruitment of vcp/p97 to the intraflagellar transport complex B (IFT-B) in cilia. This chain is UBX domain-containing protein 10, found in Danio rerio (Zebrafish).